A 340-amino-acid polypeptide reads, in one-letter code: Phenylalanine--tRNA ligase alpha subunit (340 aa).

E254 contributes to the Mg(2+) binding site.

This sequence belongs to the class-II aminoacyl-tRNA synthetase family. Phe-tRNA synthetase alpha subunit type 1 subfamily. As to quaternary structure, tetramer of two alpha and two beta subunits. It depends on Mg(2+) as a cofactor.

It is found in the cytoplasm. The catalysed reaction is tRNA(Phe) + L-phenylalanine + ATP = L-phenylalanyl-tRNA(Phe) + AMP + diphosphate + H(+). The polypeptide is Phenylalanine--tRNA ligase alpha subunit (Caldicellulosiruptor bescii (strain ATCC BAA-1888 / DSM 6725 / KCTC 15123 / Z-1320) (Anaerocellum thermophilum)).